The sequence spans 180 residues: ATP-dependent protease subunit HslV (180 aa).

Residue T2 is part of the active site. G157, C160, and T163 together coordinate Na(+).

Belongs to the peptidase T1B family. HslV subfamily. In terms of assembly, a double ring-shaped homohexamer of HslV is capped on each side by a ring-shaped HslU homohexamer. The assembly of the HslU/HslV complex is dependent on binding of ATP.

Its subcellular location is the cytoplasm. It catalyses the reaction ATP-dependent cleavage of peptide bonds with broad specificity.. Allosterically activated by HslU binding. Functionally, protease subunit of a proteasome-like degradation complex believed to be a general protein degrading machinery. This chain is ATP-dependent protease subunit HslV, found in Tolumonas auensis (strain DSM 9187 / NBRC 110442 / TA 4).